The sequence spans 171 residues: ATP synthase subunit b (171 aa).

The helical transmembrane segment at 12–34 threads the bilayer; it reads FGLNLNLFETNVINLAVVIFGLY.

It belongs to the ATPase B chain family. In terms of assembly, F-type ATPases have 2 components, F(1) - the catalytic core - and F(0) - the membrane proton channel. F(1) has five subunits: alpha(3), beta(3), gamma(1), delta(1), epsilon(1). F(0) has four main subunits: a(1), b(1), b'(1) and c(10-14). The alpha and beta chains form an alternating ring which encloses part of the gamma chain. F(1) is attached to F(0) by a central stalk formed by the gamma and epsilon chains, while a peripheral stalk is formed by the delta, b and b' chains.

It is found in the cellular thylakoid membrane. Functionally, f(1)F(0) ATP synthase produces ATP from ADP in the presence of a proton or sodium gradient. F-type ATPases consist of two structural domains, F(1) containing the extramembraneous catalytic core and F(0) containing the membrane proton channel, linked together by a central stalk and a peripheral stalk. During catalysis, ATP synthesis in the catalytic domain of F(1) is coupled via a rotary mechanism of the central stalk subunits to proton translocation. Its function is as follows. Component of the F(0) channel, it forms part of the peripheral stalk, linking F(1) to F(0). This Prochlorococcus marinus (strain MIT 9211) protein is ATP synthase subunit b.